Here is a 141-residue protein sequence, read N- to C-terminus: Large ribosomal subunit protein uL14 (141 aa).

This sequence belongs to the universal ribosomal protein uL14 family. As to quaternary structure, part of the 50S ribosomal subunit. Forms a cluster with proteins L3 and L24e, part of which may contact the 16S rRNA in 2 intersubunit bridges.

Binds to 23S rRNA. Forms part of two intersubunit bridges in the 70S ribosome. The protein is Large ribosomal subunit protein uL14 of Pyrococcus abyssi (strain GE5 / Orsay).